We begin with the raw amino-acid sequence, 233 residues long: Orotidine 5'-phosphate decarboxylase (233 aa).

Substrate is bound by residues Asp-13, Lys-35, 62–71 (DLKFHDIPNT), Thr-122, Arg-182, Gln-191, Gly-211, and Arg-212. Residue Lys-64 is the Proton donor of the active site.

It belongs to the OMP decarboxylase family. Type 1 subfamily. As to quaternary structure, homodimer.

The catalysed reaction is orotidine 5'-phosphate + H(+) = UMP + CO2. It participates in pyrimidine metabolism; UMP biosynthesis via de novo pathway; UMP from orotate: step 2/2. Catalyzes the decarboxylation of orotidine 5'-monophosphate (OMP) to uridine 5'-monophosphate (UMP). This chain is Orotidine 5'-phosphate decarboxylase, found in Pseudomonas putida (strain GB-1).